The sequence spans 272 residues: Phosphatidylglycerol--prolipoprotein diacylglyceryl transferase (272 aa).

Helical transmembrane passes span 24–44, 64–84, 99–119, and 125–145; these read WYALAYIAGLVIGWAYARHLV, LLVYTALGVILGGRLGYVVFY, LWQGGMSFHGGLVGAGVGVML, and GLPTLALGDIVSAVAPIGLFL. Arg147 lines the a 1,2-diacyl-sn-glycero-3-phospho-(1'-sn-glycerol) pocket. 3 consecutive transmembrane segments (helical) span residues 185-205, 209-229, and 245-265; these read AAAEGALLFLLLFVAVRLGAL, GLVTGLFAIGYGCARILCEFF, and MGMLLSLPLIAAGLALVAFAY.

The protein belongs to the Lgt family.

The protein localises to the cell inner membrane. It catalyses the reaction L-cysteinyl-[prolipoprotein] + a 1,2-diacyl-sn-glycero-3-phospho-(1'-sn-glycerol) = an S-1,2-diacyl-sn-glyceryl-L-cysteinyl-[prolipoprotein] + sn-glycerol 1-phosphate + H(+). The protein operates within protein modification; lipoprotein biosynthesis (diacylglyceryl transfer). Its function is as follows. Catalyzes the transfer of the diacylglyceryl group from phosphatidylglycerol to the sulfhydryl group of the N-terminal cysteine of a prolipoprotein, the first step in the formation of mature lipoproteins. The protein is Phosphatidylglycerol--prolipoprotein diacylglyceryl transferase of Methylocella silvestris (strain DSM 15510 / CIP 108128 / LMG 27833 / NCIMB 13906 / BL2).